Consider the following 191-residue polypeptide: Ribosome maturation factor RimM (191 aa).

In terms of domain architecture, PRC barrel spans 102-185 (EEEYHVSQLI…RIEINPPKGL (84 aa)).

The protein belongs to the RimM family. In terms of assembly, binds ribosomal protein uS19.

It is found in the cytoplasm. Functionally, an accessory protein needed during the final step in the assembly of 30S ribosomal subunit, possibly for assembly of the head region. Essential for efficient processing of 16S rRNA. May be needed both before and after RbfA during the maturation of 16S rRNA. It has affinity for free ribosomal 30S subunits but not for 70S ribosomes. The chain is Ribosome maturation factor RimM from Crocosphaera subtropica (strain ATCC 51142 / BH68) (Cyanothece sp. (strain ATCC 51142)).